Here is a 125-residue protein sequence, read N- to C-terminus: Putative RNA polymerase sigma-G factor (125 aa).

The protein belongs to the sigma-70 factor family.

In terms of biological role, sigma factors are initiation factors that promote the attachment of RNA polymerase to specific initiation sites and are then released. This Bacillus thuringiensis subsp. kurstaki protein is Putative RNA polymerase sigma-G factor.